Reading from the N-terminus, the 233-residue chain is Probable F-box protein At3g56670 (233 aa).

Positions 22–69 (HGGVIDIPLNTDSGVTKNTPGEIALLRFKSVSKLWSSIISSRRDFIES) constitute an F-box domain.

The chain is Probable F-box protein At3g56670 from Arabidopsis thaliana (Mouse-ear cress).